The following is a 145-amino-acid chain: Phospholipase A2 (145 aa).

The signal sequence occupies residues 1–15 (MRLLVLAALLTVGAG). Gln-16 carries the post-translational modification Pyrrolidone carboxylic acid. A propeptide spans 16–22 (QAGLNSR) (removed by trypsin). Disulfide bonds link Cys-33-Cys-99, Cys-49-Cys-145, Cys-51-Cys-67, Cys-66-Cys-127, Cys-73-Cys-120, Cys-83-Cys-113, and Cys-106-Cys-118. Ca(2+)-binding residues include Tyr-50, Gly-52, and Gly-54. The active site involves His-70. Asp-71 contacts Ca(2+). Asp-121 is a catalytic residue.

This sequence belongs to the phospholipase A2 family. As to quaternary structure, monomer or homodimer. The cofactor is Ca(2+). In terms of processing, activated by trypsin cleavage in the duodenum. Can also be activated by thrombin or autocatalytically.

It is found in the secreted. It carries out the reaction a 1,2-diacyl-sn-glycero-3-phosphocholine + H2O = a 1-acyl-sn-glycero-3-phosphocholine + a fatty acid + H(+). The enzyme catalyses 1,2-ditetradecanoyl-sn-glycero-3-phosphocholine + H2O = 1-tetradecanoyl-sn-glycero-3-phosphocholine + tetradecanoate + H(+). The catalysed reaction is 1,2-dihexadecanoyl-sn-glycero-3-phosphocholine + H2O = 1-hexadecanoyl-sn-glycero-3-phosphocholine + hexadecanoate + H(+). It catalyses the reaction 1-hexadecanoyl-2-(9Z-octadecenoyl)-sn-glycero-3-phosphocholine + H2O = 1-hexadecanoyl-sn-glycero-3-phosphocholine + (9Z)-octadecenoate + H(+). It carries out the reaction 1-hexadecanoyl-2-(5Z,8Z,11Z,14Z-eicosatetraenoyl)-sn-glycero-3-phosphocholine + H2O = 1-hexadecanoyl-sn-glycero-3-phosphocholine + (5Z,8Z,11Z,14Z)-eicosatetraenoate + H(+). The enzyme catalyses 1-hexadecanoyl-2-(9Z-octadecenoyl)-sn-glycero-3-phospho-(1'-sn-glycerol) + H2O = 1-hexadecanoyl-sn-glycero-3-phospho-(1'-sn-glycerol) + (9Z)-octadecenoate + H(+). The catalysed reaction is N-hexadecanoyl-1,2-di-(9Z-octadecenoyl)-sn-glycero-3-phosphoethanolamine + H2O = N-hexadecanoyl-1-(9Z-octadecenoyl)-sn-glycero-3-phosphoethanolamine + (9Z)-octadecenoate + H(+). It catalyses the reaction 1-hexadecanoyl-2-(9Z,12Z-octadecadienoyl)-sn-glycero-3-phosphoethanolamine + H2O = 1-hexadecanoyl-sn-glycero-3-phosphoethanolamine + (9Z,12Z)-octadecadienoate + H(+). It carries out the reaction N,1-dihexadecanoyl-2-(9Z,12Z-octadecadienoyl)-sn-glycero-3-phosphoethanolamine + H2O = N,1-dihexadecanoyl-sn-glycero-3-phosphoethanolamine + (9Z,12Z)-octadecadienoate + H(+). Secretory calcium-dependent phospholipase A2 that primarily targets dietary phospholipids in the intestinal tract. Hydrolyzes the ester bond of the fatty acyl group attached at sn-2 position of phospholipids (phospholipase A2 activity) with preference for phosphatidylethanolamines and phosphatidylglycerols over phosphatidylcholines. May play a role in the biosynthesis of N-acyl ethanolamines that regulate energy metabolism and inflammation in the intestinal tract. Hydrolyzes N-acyl phosphatidylethanolamines to N-acyl lysophosphatidylethanolamines, which are further cleaved by a lysophospholipase D to release N-acyl ethanolamines. May act in an autocrine and paracrine manner. Has anti-helminth activity in a process regulated by gut microbiota. Upon helminth infection of intestinal epithelia, directly affects phosphatidylethanolamine contents in the membrane of helminth larvae, likely controlling an array of phospholipid-mediated cellular processes such as membrane fusion and cell division while providing for better immune recognition, ultimately reducing larvae integrity and infectivity. This Bos taurus (Bovine) protein is Phospholipase A2 (PLA2G1B).